We begin with the raw amino-acid sequence, 1069 residues long: Receptor-type guanylate cyclase gcy-29 (1069 aa).

An N-terminal signal peptide occupies residues 1 to 23 (MLPNFWNFQFIFVIFCWIPIVVS). Topologically, residues 24 to 458 (DEKIVLKIGS…FREENCDYTQ (435 aa)) are extracellular. 3 N-linked (GlcNAc...) asparagine glycosylation sites follow: Asn161, Asn240, and Asn407. A helical transmembrane segment spans residues 459–479 (TIVIATAVVCIILTVFLGIWL). At 480–1069 (RRACETSALD…FKKKNNTFDF (590 aa)) the chain is on the cytoplasmic side. Positions 497–806 (RDDVQILDEE…RVRLATEIAL (310 aa)) constitute a Protein kinase domain. ATP contacts are provided by residues 503–511 (LDEEQVKSV) and Lys527. One can recognise a Guanylate cyclase domain in the interval 876 to 1006 (TVMFSDIVGF…ETVNIAAVME (131 aa)). Mg(2+) contacts are provided by Asp881, Ile882, and Asp925.

The protein belongs to the adenylyl cyclase class-4/guanylyl cyclase family. As to expression, expressed bilaterally in ASE and AFD sensory neurons.

Its subcellular location is the cell membrane. It carries out the reaction GTP = 3',5'-cyclic GMP + diphosphate. Its function is as follows. Guanylate cyclase involved in the production of the second messenger cGMP. This chain is Receptor-type guanylate cyclase gcy-29, found in Caenorhabditis elegans.